Consider the following 538-residue polypeptide: Putative cysteine ligase BshC (538 aa).

The stretch at 460-485 (KINEQIELLERMLKRNIEKKHEVELN) forms a coiled coil.

This sequence belongs to the BshC family.

Functionally, involved in bacillithiol (BSH) biosynthesis. May catalyze the last step of the pathway, the addition of cysteine to glucosamine malate (GlcN-Mal) to generate BSH. This Bacillus cereus (strain Q1) protein is Putative cysteine ligase BshC.